We begin with the raw amino-acid sequence, 671 residues long: BLOC-3 complex member HPS4 (671 aa).

Positions 269–286 are enriched in polar residues; sequence LQGSSVQYPPWDQSSPTQ. Disordered regions lie at residues 269–291 and 417–497; these read LQGS…EDAW and LADL…PSGR. The span at 467–477 shows a compositional bias: low complexity; that stretch reads SALPRSSRSPD.

Component of the biogenesis of lysosome-related organelles complex-3 (or BLOC-3), a heterodimer of HPS1 and HPS4. HPS4 and the BLOC-3 complex interact with the GTP-bound form of RAB9B but not with the GDP-bound form of RAB9B. HPS4 and the BLOC-3 complex interact with the GTP-bound form of RAB9A but not with the GDP-bound form of RAB9A. HPS4 does not interact RAB4A and RAB7A. As to expression, highly expressed in heart, brain, liver and testis. Expressed at lower level in skeletal muscle.

In terms of biological role, component of the BLOC-3 complex, a complex that acts as a guanine exchange factor (GEF) for RAB32 and RAB38, promotes the exchange of GDP to GTP, converting them from an inactive GDP-bound form into an active GTP-bound form. The BLOC-3 complex plays an important role in the control of melanin production and melanosome biogenesis and promotes the membrane localization of RAB32 and RAB38. The polypeptide is BLOC-3 complex member HPS4 (Hps4) (Mus musculus (Mouse)).